Reading from the N-terminus, the 640-residue chain is Protein argonaute (640 aa).

An N-terminal domain region spans residues 1-100 (MYLNLYEIKI…YIKKKFIDNN (100 aa)). The tract at residues 101-153 (FYYKRGNNYISINDKFPLDSNTNVNAHLTYKIKLYKINERYYISVLPKFTFLS) is linker L1. The tract at residues 154-209 (DKPALESPIKSTYLFNIKSGKTFPYISGLNGVLKIDLGENGIKEVLFPENYYFNFT) is PAZ domain. Residues 210-291 (SKEAEKFGFS…KYSFYKNDQK (82 aa)) are linker L2. Positions 292-423 (IKIAFFFSSK…YVYKMGNFIP (132 aa)) are mid domain. A PIWI domain region spans residues 424–640 (ECQPYVIRNL…EWKLYIPYMK (217 aa)). Residues Asp-445, Glu-481, Asp-515, and Asn-623 contribute to the active site. Mn(2+) is bound at residue Asp-445. Residues Asp-515 and Asn-623 each contribute to the Mn(2+) site.

Belongs to the argonaute family. Long pAgo subfamily. It depends on Mn(2+) as a cofactor.

A highly versatile argonaute that uses 5'-phospho- and 5'-OH- guide RNA (gRNA) or DNA (gDNA) to cleave target RNA or ssDNA (tDNA) in all possible combinations; has no detectable activity in the absence of guide. Uses short guide sequences (18-21 nucleotides (nt) on average) to bind complementary target nucleic acids resulting in target cleavage in a site-specific manner. Using 5'-phospho-gRNA or 5'-OH-gRNA the cleavage site is 10 nt downstream of the target residue base-paired with the 5'-end of the gRNA, using 5'-phospho-gDNA the cleavage site is 11 nucleotides (nt) downstream, while with 5'-OH-gDNA the cleavage site is 9 nt downstream. In Marinitoga hydrogenitolerans (strain DSM 16785 / JCM 12826 / AT1271), this protein is Protein argonaute.